The following is a 238-amino-acid chain: Tritrans,polycis-undecaprenyl-diphosphate synthase (geranylgeranyl-diphosphate specific) (238 aa).

Residue Asp18 is part of the active site. Asp18 serves as a coordination point for Mg(2+). Substrate-binding positions include 19–22 (GNRR) and 64–66 (STE). The Proton acceptor role is filled by Asn67. Substrate contacts are provided by residues Arg70, Arg187, and 193-195 (RLS). Mg(2+) is bound at residue Glu206.

This sequence belongs to the UPP synthase family. In terms of assembly, homodimer. The cofactor is Mg(2+).

It carries out the reaction geranylgeranyl diphosphate + 7 isopentenyl diphosphate = tri-trans,hepta-cis-undecaprenyl diphosphate + 7 diphosphate. Catalyzes the sequential condensation of isopentenyl diphosphate (IPP) with geranylgeranyl diphosphate (GGPP) to yield (2Z,6Z,10Z,14Z,18Z,22Z,26Z,30E,34E,38E)-undecaprenyl diphosphate (tritrans,heptacis-UPP). It is probably the precursor of glycosyl carrier lipids. In Pyrobaculum aerophilum (strain ATCC 51768 / DSM 7523 / JCM 9630 / CIP 104966 / NBRC 100827 / IM2), this protein is Tritrans,polycis-undecaprenyl-diphosphate synthase (geranylgeranyl-diphosphate specific).